The primary structure comprises 142 residues: MISTARVPADKPVRIAFSLNDASDDTPPEDSIPLVFPELDQQLQPLPPCHDSEESMEVFKQHCQIAEEYHEVKKEITLLEQRKKELIAKLDQAEKEKVDAAELVREFEALTEENRTLRLAQSQCVEQLEKLRIQYQKRQGSS.

In terms of tissue distribution, detected in lung and peripheral blood leukocytes. Expressed predominantly in peripheral blood leukocytes and ubiquitously in adult and fetal tissues. Also expressed strongly in breast carcinoma GI-101, colon adenocarcinoma GI-112, and prostatic adenocarcinoma PC3.

This Homo sapiens (Human) protein is MAP3K7 C-terminal-like protein (MAP3K7CL).